A 73-amino-acid polypeptide reads, in one-letter code: Translation initiation factor IF-1 2 (73 aa).

Residues 1-72 (MAKEELVEFG…TKGRINYRHK (72 aa)) enclose the S1-like domain.

The protein belongs to the IF-1 family. Component of the 30S ribosomal translation pre-initiation complex which assembles on the 30S ribosome in the order IF-2 and IF-3, IF-1 and N-formylmethionyl-tRNA(fMet); mRNA recruitment can occur at any time during PIC assembly.

Its subcellular location is the cytoplasm. Its function is as follows. One of the essential components for the initiation of protein synthesis. Stabilizes the binding of IF-2 and IF-3 on the 30S subunit to which N-formylmethionyl-tRNA(fMet) subsequently binds. Helps modulate mRNA selection, yielding the 30S pre-initiation complex (PIC). Upon addition of the 50S ribosomal subunit IF-1, IF-2 and IF-3 are released leaving the mature 70S translation initiation complex. This Cupriavidus pinatubonensis (strain JMP 134 / LMG 1197) (Cupriavidus necator (strain JMP 134)) protein is Translation initiation factor IF-1 2.